We begin with the raw amino-acid sequence, 349 residues long: Protein-glutamate methylesterase/protein-glutamine glutaminase (349 aa).

The 118-residue stretch at 5-122 folds into the Response regulatory domain; it reads RVLSVDDSAL…REGMLAYSEM (118 aa). Residue Asp56 is modified to 4-aspartylphosphate. The region spanning 152–344 is the CheB-type methylesterase domain; it reads LLSSEKLIAI…QQMLAKISAG (193 aa). Residues Ser164, His190, and Asp286 contribute to the active site.

Belongs to the CheB family. Phosphorylated by CheA. Phosphorylation of the N-terminal regulatory domain activates the methylesterase activity.

It is found in the cytoplasm. It catalyses the reaction [protein]-L-glutamate 5-O-methyl ester + H2O = L-glutamyl-[protein] + methanol + H(+). The catalysed reaction is L-glutaminyl-[protein] + H2O = L-glutamyl-[protein] + NH4(+). Involved in chemotaxis. Part of a chemotaxis signal transduction system that modulates chemotaxis in response to various stimuli. Catalyzes the demethylation of specific methylglutamate residues introduced into the chemoreceptors (methyl-accepting chemotaxis proteins or MCP) by CheR. Also mediates the irreversible deamidation of specific glutamine residues to glutamic acid. The polypeptide is Protein-glutamate methylesterase/protein-glutamine glutaminase (Escherichia coli O6:K15:H31 (strain 536 / UPEC)).